We begin with the raw amino-acid sequence, 111 residues long: WAP four-disulfide core domain protein 12 (111 aa).

The first 23 residues, 1–23, serve as a signal peptide directing secretion; the sequence is MGSSSFLVLMVSLALVTLVAAEG. The 48-residue stretch at 27-74 folds into the WAP domain; sequence NIEKPGVCPADNIRCIKSDPPQCHTDQDCQGIRKCCYLHCGFKCVIPV. Cystine bridges form between Cys34/Cys62, Cys41/Cys66, Cys49/Cys61, and Cys55/Cys70. The tract at residues 80-111 is disordered; the sequence is GGNKDEDVSRPCPEPGWEAKPPGVFSTRCPQK.

It localises to the secreted. Functionally, antibacterial protein. Putative acid-stable proteinase inhibitor. This is WAP four-disulfide core domain protein 12 (WFDC12) from Callithrix jacchus (White-tufted-ear marmoset).